We begin with the raw amino-acid sequence, 278 residues long: Orotidine 5'-phosphate decarboxylase (278 aa).

Residues D40, 62–64, 93–102, Y229, and R247 each bind substrate; these read KTH and DRKFIDIGNT. The active-site Proton donor is the K95.

The protein belongs to the OMP decarboxylase family.

The catalysed reaction is orotidine 5'-phosphate + H(+) = UMP + CO2. Its pathway is pyrimidine metabolism; UMP biosynthesis via de novo pathway; UMP from orotate: step 2/2. The polypeptide is Orotidine 5'-phosphate decarboxylase (pyrG) (Aspergillus fumigatus (strain ATCC MYA-4609 / CBS 101355 / FGSC A1100 / Af293) (Neosartorya fumigata)).